The chain runs to 111 residues: Histone H2A-Bbd type 1 (111 aa).

This sequence belongs to the histone H2A family. As to quaternary structure, the nucleosome is a histone octamer containing two molecules each of H2A, H2B, H3 and H4 assembled in one H3-H4 heterotetramer and two H2A-H2B heterodimers. Incorporated into nucleosomes during late spermatogenesis. Interacts with H2BC1/TH2B; preferentially dimerizes with H2BC1/TH2B to form nucleosomes. Highly expressed in adult testis, mainly in spermatocytes.

The protein resides in the nucleus. It localises to the chromosome. Atypical histone H2A which replaces conventional H2A during late spermatogenesis and is involved in the replacement of histones to protamine in male germ cells. Core component of nucleosome: nucleosomes wrap and compact DNA into chromatin, limiting DNA accessibility to the cellular machineries which require DNA as a template. Nucleosomes containing H2AB1 only wrap 130 bp of DNA, compared to 147 bp for classical nucleosomes. In condensing spermatids, the heterodimer between H2AB1 and H2BC1/TH2B is loaded onto the nucleosomes and promotes loading of transition proteins (TNP1 and TNP2) onto the nucleosomes. Inclusion of the H2AB1-H2BC1/TH2B dimer into chromatin opens the nucleosomes, releasing the nucleosomal DNA ends and allowing the invasion of nucleosomes by transition proteins (TNP1 and TNP2). Then, transition proteins drive the recruitment and processing of protamines, which are responsible for histone eviction. This chain is Histone H2A-Bbd type 1 (H2ab1), found in Mus musculus (Mouse).